The primary structure comprises 309 residues: Elongation factor Ts (309 aa).

The segment at 82–85 (TDFV) is involved in Mg(2+) ion dislocation from EF-Tu.

The protein belongs to the EF-Ts family.

The protein resides in the cytoplasm. Its function is as follows. Associates with the EF-Tu.GDP complex and induces the exchange of GDP to GTP. It remains bound to the aminoacyl-tRNA.EF-Tu.GTP complex up to the GTP hydrolysis stage on the ribosome. This is Elongation factor Ts (tsf) from Rickettsia prowazekii (strain Madrid E).